Consider the following 283-residue polypeptide: Orotidine 5'-phosphate decarboxylase (283 aa).

Substrate is bound by residues Asp40, 62-64 (KTH), 93-102 (DRKFADIGNT), Tyr220, and Arg239. Lys95 functions as the Proton donor in the catalytic mechanism.

This sequence belongs to the OMP decarboxylase family.

It catalyses the reaction orotidine 5'-phosphate + H(+) = UMP + CO2. Its pathway is pyrimidine metabolism; UMP biosynthesis via de novo pathway; UMP from orotate: step 2/2. This chain is Orotidine 5'-phosphate decarboxylase (PYR6), found in Mycosarcoma maydis (Corn smut fungus).